Reading from the N-terminus, the 216-residue chain is Ribosomal RNA small subunit methyltransferase G (216 aa).

S-adenosyl-L-methionine-binding positions include G83, M88, 134–135 (VE), and R149.

The protein belongs to the methyltransferase superfamily. RNA methyltransferase RsmG family.

The protein resides in the cytoplasm. It carries out the reaction guanosine(527) in 16S rRNA + S-adenosyl-L-methionine = N(7)-methylguanosine(527) in 16S rRNA + S-adenosyl-L-homocysteine. Functionally, specifically methylates the N7 position of guanine in position 527 of 16S rRNA. The protein is Ribosomal RNA small subunit methyltransferase G of Pseudomonas putida (strain GB-1).